Here is a 394-residue protein sequence, read N- to C-terminus: NAD(P)H-quinone oxidoreductase subunit H (394 aa).

This sequence belongs to the complex I 49 kDa subunit family. NDH-1 can be composed of about 15 different subunits; different subcomplexes with different compositions have been identified which probably have different functions.

Its subcellular location is the cellular thylakoid membrane. It catalyses the reaction a plastoquinone + NADH + (n+1) H(+)(in) = a plastoquinol + NAD(+) + n H(+)(out). The catalysed reaction is a plastoquinone + NADPH + (n+1) H(+)(in) = a plastoquinol + NADP(+) + n H(+)(out). NDH-1 shuttles electrons from an unknown electron donor, via FMN and iron-sulfur (Fe-S) centers, to quinones in the respiratory and/or the photosynthetic chain. The immediate electron acceptor for the enzyme in this species is believed to be plastoquinone. Couples the redox reaction to proton translocation, and thus conserves the redox energy in a proton gradient. Cyanobacterial NDH-1 also plays a role in inorganic carbon-concentration. This is NAD(P)H-quinone oxidoreductase subunit H from Synechococcus sp. (strain WH7803).